A 78-amino-acid chain; its full sequence is HssA/B-like protein 29 (78 aa).

The interval 1 to 31 (MTLFSSITSISKTNTSSKSSLNSFSGSSLSM) is disordered.

This sequence belongs to the hssA/B family.

The chain is HssA/B-like protein 29 (hssl29) from Dictyostelium discoideum (Social amoeba).